The following is a 536-amino-acid chain: Octopamine receptor beta-2R (536 aa).

A disordered region spans residues 1–26; that stretch reads MLLCDGLGPEPPRQRHRNRTSAARIR. At 1 to 157 the chain is on the extracellular side; that stretch reads MLLCDGLGPE…LDNIVWVFKA (157 aa). Residues 14–26 are compositionally biased toward basic residues; it reads QRHRNRTSAARIR. 4 N-linked (GlcNAc...) asparagine glycosylation sites follow: asparagine 18, asparagine 92, asparagine 113, and asparagine 126. Residues 158 to 178 traverse the membrane as a helical segment; the sequence is FVMLLIIIAAICGNLLVIISV. Residues 179 to 190 lie on the Cytoplasmic side of the membrane; sequence MRVRKLRVITNY. Residues 191–211 form a helical membrane-spanning segment; it reads FVVSLAMADIMVAIMAMTFNF. The Extracellular portion of the chain corresponds to 212–233; it reads SVQVTGRWNFSPFLCDLWNSLD. Residues 234–256 traverse the membrane as a helical segment; the sequence is VYFSTASILHLCCISVDRYYAIV. Over 257-270 the chain is Cytoplasmic; the sequence is KPLKYPISMTKRVV. Residues 271 to 291 form a helical membrane-spanning segment; the sequence is GIMLLNTWISPALLSFLPIFI. Residues 292–320 lie on the Extracellular side of the membrane; sequence GWYTTPQHQQFVIQNPTQCSFVVNKYYAV. Residues 321-341 traverse the membrane as a helical segment; sequence ISSSISFWIPCTIMIFTYLAI. Residues 342-412 are Cytoplasmic-facing; that stretch reads FREANRQEKQ…MKREHKAART (71 aa). Residues 413-433 traverse the membrane as a helical segment; the sequence is LGIIMGTFILCWLPFFLWYTL. At 434–444 the chain is on the extracellular side; it reads SMTCEECQVPD. A helical transmembrane segment spans residues 445 to 465; it reads IVVSILFWIGYFNSTLNPLIY. At 466-536 the chain is on the cytoplasmic side; the sequence is AYFNRDFREA…RRQSQMVDNL (71 aa).

The protein belongs to the G-protein coupled receptor 1 family. In terms of tissue distribution, in the adult, expressed in the superior protocerebrum and the optic lobe medulla of the central nervous system, nurse cells of egg chambers in the ovary at oogenic stages 1-10, and spermatogonia and spermatocytes in the testis. Expressed in the oviduct epithelium. Also expressed in the spermatheca. Expressed in embryonic and larval ventral nerve cord and brain lobe, embryonic and larval salivary glands and larval imaginal disk and midgut. Also expressed in larval synaptic boutons.

Its subcellular location is the cell membrane. Functionally, autoreceptor for octopamine (OA), which is a neurotransmitter, neurohormone, and neuromodulator in invertebrates. Essential for ovulation and fertilization. During ovulation it mediates the OA-induced relaxation of the oviduct visceral muscles, by increasing cAMP levels and activating effectors such as calmodulin-dependent kinase II (CaMKII) and cAMP-dependent protein kinase A (PKA) pathways. Positively regulates synaptic growth; an action that is antagonized by Octbeta1R. The sequence is that of Octopamine receptor beta-2R from Drosophila melanogaster (Fruit fly).